The sequence spans 139 residues: Crossover junction endodeoxyribonuclease Hje (139 aa).

Mg(2+)-binding residues include glutamate 10, aspartate 39, and glutamate 52.

Belongs to the Holliday junction resolvase Hjc family. Hje subfamily. In terms of assembly, homodimer. Requires Mg(2+) as cofactor.

The catalysed reaction is Endonucleolytic cleavage at a junction such as a reciprocal single-stranded crossover between two homologous DNA duplexes (Holliday junction).. Functionally, a structure-specific endonuclease that resolves Holliday junction (HJ) intermediates during genetic recombination. Acts only on 4-way DNA junctions in a sequence non-specific manner; introduces paired nicks in opposing strands 2 bases 3' of the point of strand exchange only on continuous strands of 4-way junction DNA. Cleaves both mobile and immobile junctions. Its function is as follows. Redundant function with Holliday junction resolvase Hjc. This Sulfolobus acidocaldarius (strain ATCC 33909 / DSM 639 / JCM 8929 / NBRC 15157 / NCIMB 11770) protein is Crossover junction endodeoxyribonuclease Hje.